The chain runs to 414 residues: Serine hydroxymethyltransferase (414 aa).

Residues Leu-116 and 120–122 (GHL) each bind (6S)-5,6,7,8-tetrahydrofolate. Position 224 is an N6-(pyridoxal phosphate)lysine (Lys-224). (6S)-5,6,7,8-tetrahydrofolate-binding positions include Glu-240 and 348–350 (SPF).

It belongs to the SHMT family. In terms of assembly, homodimer. Pyridoxal 5'-phosphate is required as a cofactor.

It localises to the cytoplasm. It catalyses the reaction (6R)-5,10-methylene-5,6,7,8-tetrahydrofolate + glycine + H2O = (6S)-5,6,7,8-tetrahydrofolate + L-serine. It participates in one-carbon metabolism; tetrahydrofolate interconversion. Its pathway is amino-acid biosynthesis; glycine biosynthesis; glycine from L-serine: step 1/1. Catalyzes the reversible interconversion of serine and glycine with tetrahydrofolate (THF) serving as the one-carbon carrier. This reaction serves as the major source of one-carbon groups required for the biosynthesis of purines, thymidylate, methionine, and other important biomolecules. Also exhibits THF-independent aldolase activity toward beta-hydroxyamino acids, producing glycine and aldehydes, via a retro-aldol mechanism. This chain is Serine hydroxymethyltransferase, found in Campylobacter jejuni (strain RM1221).